We begin with the raw amino-acid sequence, 1796 residues long: Non-reducing polyketide synthase nscA (1796 aa).

Residues 18 to 256 form an N-terminal acylcarrier protein transacylase domain (SAT) region; it reads DDLKDLFRRL…PLPVYDGLCH (239 aa). A Ketosynthase family 3 (KS3) domain is found at 392–825; that stretch reads SSKLAIVGMA…GGNTTLLLED (434 aa). Residues C565, H700, and H743 each act as for beta-ketoacyl synthase activity in the active site. The interval 931–1251 is malonyl-CoA:ACP transacylase (MAT) domain; sequence FTGQGAYYSG…SLVTLHLAGL (321 aa). The segment at 1317 to 1636 is product template (PT) domain; it reads TSLVHQITAE…RLLMDRFFSP (320 aa). The tract at residues 1321 to 1457 is N-terminal hotdog fold; the sequence is HQITAETVEA…ATVRFEDPVA (137 aa). Residues 1321–1631 form the PKS/mFAS DH domain; it reads HQITAETVEA…FRRVPRLLMD (311 aa). H1353 (proton acceptor; for dehydratase activity) is an active-site residue. The C-terminal hotdog fold stretch occupies residues 1485-1631; the sequence is ASRLSKPLAY…FRRVPRLLMD (147 aa). The active-site Proton donor; for dehydratase activity is the D1542. Residues 1688-1720 form a disordered region; sequence TPESTPPLAPSSESSTPKESPIATPPESERADP. The span at 1697 to 1708 shows a compositional bias: low complexity; sequence PSSESSTPKESP. One can recognise a Carrier domain in the interval 1719–1796; sequence DPMDNMVSQC…EMTAWIEEYC (78 aa). Position 1756 is an O-(pantetheine 4'-phosphoryl)serine (S1756).

Pantetheine 4'-phosphate is required as a cofactor.

It participates in secondary metabolite biosynthesis. Functionally, non-reducing polyketide synthase; part of the gene cluster that mediates the biosynthesis of neosartoricin B, a prenylated anthracenone that probably exhibits T-cell antiproliferative activity, suggestive of a physiological role as an immunosuppressive agent. The non-reducing polyketide synthase nscA probably synthesizes and cyclizes the decaketide backbone. The hydrolase nscB then mediates the product release through hydrolysis followed by spontaneous decarboxylation. The prenyltransferase nscD catalyzes the addition of the dimethylallyl group to the aromatic C5. The FAD-dependent monooxygenase nscC is then responsible for the stereospecific hydroxylation at C2. Neosartoricin B can be converted into two additional compounds neosartoricins C and D. Neosartoricin C is a spirocyclic compound that is cyclized through the attack of C3 hydroxyl on C14, followed by dehydration. On the other hand, neosartoricin D is a further cyclized compound in which attack of C2 on C14 in neosartoricin C results in the formation of the acetal-containing dioxabicyclo-octanone ring. Both of these compounds are novel and possibly represent related metabolites of the gene cluster. The protein is Non-reducing polyketide synthase nscA of Arthroderma otae (strain ATCC MYA-4605 / CBS 113480) (Microsporum canis).